The sequence spans 878 residues: Phosphoenolpyruvate carboxylase (878 aa).

Active-site residues include His-140 and Lys-545.

The protein belongs to the PEPCase type 1 family. The cofactor is Mg(2+).

The catalysed reaction is oxaloacetate + phosphate = phosphoenolpyruvate + hydrogencarbonate. Forms oxaloacetate, a four-carbon dicarboxylic acid source for the tricarboxylic acid cycle. The protein is Phosphoenolpyruvate carboxylase of Ectopseudomonas mendocina (strain ymp) (Pseudomonas mendocina).